Reading from the N-terminus, the 312-residue chain is Protoheme IX farnesyltransferase 1 (312 aa).

Transmembrane regions (helical) follow at residues 21–41, 53–73, 105–125, 127–147, 156–176, 182–202, 225–245, 246–266, and 292–312; these read GVLA…LLVT, IPSP…AGSA, SALV…ALGA, LLAA…YTLV, IVWG…AVTG, ALVM…SLAM, VSAR…LLVP, ATSW…LIVA, and LALL…SFVA.

The protein belongs to the UbiA prenyltransferase family. Protoheme IX farnesyltransferase subfamily.

Its subcellular location is the cell membrane. The catalysed reaction is heme b + (2E,6E)-farnesyl diphosphate + H2O = Fe(II)-heme o + diphosphate. The protein operates within porphyrin-containing compound metabolism; heme O biosynthesis; heme O from protoheme: step 1/1. Its function is as follows. Converts heme B (protoheme IX) to heme O by substitution of the vinyl group on carbon 2 of heme B porphyrin ring with a hydroxyethyl farnesyl side group. The chain is Protoheme IX farnesyltransferase 1 from Saccharopolyspora erythraea (strain ATCC 11635 / DSM 40517 / JCM 4748 / NBRC 13426 / NCIMB 8594 / NRRL 2338).